Consider the following 318-residue polypeptide: MKHAEYEYLNLCRHVMEHGTKKEDRTGTGTVSVFGYQMRFDLSKGFPLLTTKRVPFRLVASELLWFMKGDTNIRYLLQHNNNIWNEWAFKNWVESDEYKGPDMTNFGLRSQEDEAFKTQYDEQMEIFKKNVLEDDEFARKYGYLGDVYGKQWRAWKTAAGETIDQLKDVIEMIKKTPDSRRLIVSAWNPEDVPNMALPPCHTLFQFYVADGKLSCQLYQRSGDIFLGIPFNIASYSLLTHLIAHECGLAVGEFVHTIGDAHIYTNHFEQVKKQLAREPRPFPTLKLNSDVKSVFDFEMGDLTIEGYDPHPAIKAPVAV.

DUMP contacts are provided by residues arginine 25 and 180-181; that span reads RR. Cysteine 200 acts as the Nucleophile in catalysis. DUMP is bound by residues 220-223, asparagine 231, and 261-263; these read RSGD and HIY. A (6R)-5,10-methylene-5,6,7,8-tetrahydrofolate-binding site is contributed by aspartate 223. (6R)-5,10-methylene-5,6,7,8-tetrahydrofolate is bound at residue alanine 317.

The protein belongs to the thymidylate synthase family. Bacterial-type ThyA subfamily. As to quaternary structure, homodimer.

It is found in the cytoplasm. The enzyme catalyses dUMP + (6R)-5,10-methylene-5,6,7,8-tetrahydrofolate = 7,8-dihydrofolate + dTMP. It participates in pyrimidine metabolism; dTTP biosynthesis. Its function is as follows. Catalyzes the reductive methylation of 2'-deoxyuridine-5'-monophosphate (dUMP) to 2'-deoxythymidine-5'-monophosphate (dTMP) while utilizing 5,10-methylenetetrahydrofolate (mTHF) as the methyl donor and reductant in the reaction, yielding dihydrofolate (DHF) as a by-product. This enzymatic reaction provides an intracellular de novo source of dTMP, an essential precursor for DNA biosynthesis. The polypeptide is Thymidylate synthase (Bacillus cytotoxicus (strain DSM 22905 / CIP 110041 / 391-98 / NVH 391-98)).